Consider the following 118-residue polypeptide: Large ribosomal subunit protein bL20 (118 aa).

Belongs to the bacterial ribosomal protein bL20 family.

In terms of biological role, binds directly to 23S ribosomal RNA and is necessary for the in vitro assembly process of the 50S ribosomal subunit. It is not involved in the protein synthesizing functions of that subunit. The polypeptide is Large ribosomal subunit protein bL20 (Francisella tularensis subsp. novicida (strain U112)).